The following is a 320-amino-acid chain: Cytochrome f (320 aa).

The first 35 residues, 1 to 35 (MQNRNTFSWVKDQMSRFISVSIMIYVITRTSISNA), serve as a signal peptide directing secretion. 4 residues coordinate heme: tyrosine 36, cysteine 56, cysteine 59, and histidine 60. The helical transmembrane segment at 286–306 (VQGLLFFFASVILAQIFLVLK) threads the bilayer.

It belongs to the cytochrome f family. In terms of assembly, the 4 large subunits of the cytochrome b6-f complex are cytochrome b6, subunit IV (17 kDa polypeptide, petD), cytochrome f and the Rieske protein, while the 4 small subunits are PetG, PetL, PetM and PetN. The complex functions as a dimer. Heme serves as cofactor.

It localises to the plastid. The protein localises to the chloroplast thylakoid membrane. Its function is as follows. Component of the cytochrome b6-f complex, which mediates electron transfer between photosystem II (PSII) and photosystem I (PSI), cyclic electron flow around PSI, and state transitions. The chain is Cytochrome f from Ceratophyllum demersum (Rigid hornwort).